The following is a 457-amino-acid chain: L-asparaginase-like protein GA18140 (457 aa).

The signal sequence occupies residues M1 to A20. 3 disulfides stabilise this stretch: C72/C78, C172/C188, and C327/C354.

It belongs to the Ntn-hydrolase family.

This Drosophila pseudoobscura pseudoobscura (Fruit fly) protein is L-asparaginase-like protein GA18140.